A 329-amino-acid chain; its full sequence is DNA-directed RNA polymerase subunit alpha (329 aa).

Residues Met-1–Arg-234 form an alpha N-terminal domain (alpha-NTD) region. The segment at Phe-248 to Leu-329 is alpha C-terminal domain (alpha-CTD).

The protein belongs to the RNA polymerase alpha chain family. As to quaternary structure, homodimer. The RNAP catalytic core consists of 2 alpha, 1 beta, 1 beta' and 1 omega subunit. When a sigma factor is associated with the core the holoenzyme is formed, which can initiate transcription.

It catalyses the reaction RNA(n) + a ribonucleoside 5'-triphosphate = RNA(n+1) + diphosphate. In terms of biological role, DNA-dependent RNA polymerase catalyzes the transcription of DNA into RNA using the four ribonucleoside triphosphates as substrates. The protein is DNA-directed RNA polymerase subunit alpha of Shewanella sp. (strain ANA-3).